Consider the following 176-residue polypeptide: Disulfide bond formation protein B (176 aa).

Topologically, residues 1–14 (MLRFLNQCSQGRGA) are cytoplasmic. A helical transmembrane segment spans residues 15-31 (WLLMAFTALALELTALW). The Periplasmic segment spans residues 32–49 (FQHVMLLKPCVLCIYERC). Cys-41 and Cys-44 are disulfide-bonded. Residues 50–65 (ALFGVLGAALIGAIAP) form a helical membrane-spanning segment. At 66–71 (KTPLRY) the chain is on the cytoplasmic side. A helical transmembrane segment spans residues 72–89 (VAMVIWLYSAFRGVQLTY). Residues 90 to 144 (EHTMLQLYPSPFATCDFMVRFPEWLPLDKWVPQVFVASGDCAERQWDFLGLEMPQ) lie on the Periplasmic side of the membrane. Cys-104 and Cys-130 are disulfide-bonded. Residues 145–163 (WLLGIFIAYLIVAVLVMIS) traverse the membrane as a helical segment. Residues 164–176 (QPFKAKKRDLFGR) lie on the Cytoplasmic side of the membrane.

This sequence belongs to the DsbB family.

The protein localises to the cell inner membrane. In terms of biological role, required for disulfide bond formation in some periplasmic proteins. Acts by oxidizing the DsbA protein. This Shigella sonnei (strain Ss046) protein is Disulfide bond formation protein B.